The primary structure comprises 200 residues: Trem-like transcript 4 protein (200 aa).

Positions 1-25 are cleaved as a signal peptide; sequence MAWGGVHTCCFHLCCCCSWPQGAVP. In terms of domain architecture, Ig-like V-type spans 26 to 126; that stretch reads EELHKHPGQT…NIITVLRNIS (101 aa). An intrachain disulfide couples Cys40 to Cys109. Asn93 carries N-linked (GlcNAc...) asparagine glycosylation.

It is found in the secreted. Positively regulates Toll-like receptor TLR7 signaling in macrophages. The polypeptide is Trem-like transcript 4 protein (TREML4) (Homo sapiens (Human)).